Consider the following 269-residue polypeptide: Formamidopyrimidine-DNA glycosylase (269 aa).

The active-site Schiff-base intermediate with DNA is Pro-2. Glu-3 serves as the catalytic Proton donor. Lys-57 functions as the Proton donor; for beta-elimination activity in the catalytic mechanism. The DNA site is built by His-90, Arg-109, and Lys-150. Residues 235-269 (QVYGKAGESCPECGEAIQELKIGQRNTFYCSYCQC) form an FPG-type zinc finger. Arg-259 (proton donor; for delta-elimination activity) is an active-site residue.

This sequence belongs to the FPG family. In terms of assembly, monomer. Zn(2+) is required as a cofactor.

The catalysed reaction is Hydrolysis of DNA containing ring-opened 7-methylguanine residues, releasing 2,6-diamino-4-hydroxy-5-(N-methyl)formamidopyrimidine.. The enzyme catalyses 2'-deoxyribonucleotide-(2'-deoxyribose 5'-phosphate)-2'-deoxyribonucleotide-DNA = a 3'-end 2'-deoxyribonucleotide-(2,3-dehydro-2,3-deoxyribose 5'-phosphate)-DNA + a 5'-end 5'-phospho-2'-deoxyribonucleoside-DNA + H(+). Its function is as follows. Involved in base excision repair of DNA damaged by oxidation or by mutagenic agents. Acts as a DNA glycosylase that recognizes and removes damaged bases. Has a preference for oxidized purines, such as 7,8-dihydro-8-oxoguanine (8-oxoG). Has AP (apurinic/apyrimidinic) lyase activity and introduces nicks in the DNA strand. Cleaves the DNA backbone by beta-delta elimination to generate a single-strand break at the site of the removed base with both 3'- and 5'-phosphates. The polypeptide is Formamidopyrimidine-DNA glycosylase (Vibrio vulnificus (strain YJ016)).